The chain runs to 228 residues: NAD(P)H-hydrate epimerase (228 aa).

Positions 9–209 (VRAVERLAHR…LLGLTPAFLA (201 aa)) constitute a YjeF N-terminal domain. Residue 53–57 (NNGGD) participates in (6S)-NADPHX binding. Positions 54 and 115 each coordinate K(+). Residues 119 to 125 (GIGLARP) and aspartate 148 contribute to the (6S)-NADPHX site. Serine 151 is a K(+) binding site.

The protein belongs to the NnrE/AIBP family. It depends on K(+) as a cofactor.

The enzyme catalyses (6R)-NADHX = (6S)-NADHX. The catalysed reaction is (6R)-NADPHX = (6S)-NADPHX. Its function is as follows. Catalyzes the epimerization of the S- and R-forms of NAD(P)HX, a damaged form of NAD(P)H that is a result of enzymatic or heat-dependent hydration. This is a prerequisite for the S-specific NAD(P)H-hydrate dehydratase to allow the repair of both epimers of NAD(P)HX. This is NAD(P)H-hydrate epimerase from Bordetella pertussis (strain CS).